The following is a 512-amino-acid chain: Sodium/proline symporter (512 aa).

13 helical membrane-spanning segments follow: residues 16–36 (WQTY…GFYG), 54–74 (IGPY…WMIM), 85–105 (LSAM…YFVV), 139–159 (IISG…GFVS), 174–194 (FGLI…GYLA), 200–220 (FFQG…AMMN), 240–260 (LFKG…LGYF), 286–306 (ISWM…GIAF), 327–347 (VLFH…AIMS), 381–401 (FVMI…AIAW), 410–430 (LVGN…LFAL), 438–458 (AGAV…IAWI), and 467–487 (IFGL…TYVV).

This sequence belongs to the sodium:solute symporter (SSF) (TC 2.A.21) family.

Its subcellular location is the cell membrane. It carries out the reaction L-proline(in) + Na(+)(in) = L-proline(out) + Na(+)(out). Functionally, catalyzes the sodium-dependent uptake of extracellular L-proline. Since most S.aureus strains are L-proline auxotrophs, this transporter may aid the bacterial persistence during an infection of tissues with low proline concentrations. This chain is Sodium/proline symporter (putP), found in Staphylococcus aureus (strain Mu3 / ATCC 700698).